Consider the following 469-residue polypeptide: Gustatory receptor for sugar taste 64f (469 aa).

Residues M1–C117 are Cytoplasmic-facing. Residues F118–L138 traverse the membrane as a helical segment. Over N139–S146 the chain is Extracellular. Residues I147–A167 traverse the membrane as a helical segment. At R168–T199 the chain is on the cytoplasmic side. Residues I200–V220 form a helical membrane-spanning segment. The Extracellular segment spans residues S221–N265. Residue N230 is glycosylated (N-linked (GlcNAc...) asparagine). The chain crosses the membrane as a helical span at residues V266–L286. At A287–A330 the chain is on the cytoplasmic side. The helical transmembrane segment at I331–L351 threads the bilayer. At R352–S353 the chain is on the extracellular side. A helical transmembrane segment spans residues L354–I374. Residues G375–K435 are Cytoplasmic-facing. The chain crosses the membrane as a helical span at residues L436–E456. Residues D457 to S469 are Extracellular-facing.

Belongs to the insect chemoreceptor superfamily. Gustatory receptor (GR) family. Gr5a subfamily. In terms of tissue distribution, expressed in Gr5a-expressing sugar-sensing cells.

The protein localises to the cell membrane. Its function is as follows. One of the few identified sugar gustatory receptors identified so far and which promotes the starvation-induced increase of feeding motivation. Required in combination with Gr64a to detect sucrose, maltose, and glucose. The sequence is that of Gustatory receptor for sugar taste 64f (Gr64f) from Drosophila melanogaster (Fruit fly).